The chain runs to 325 residues: G-protein coupled receptor E6 (325 aa).

A run of 7 helical transmembrane segments spans residues 45-65, 71-91, 106-126, 145-165, 198-218, 233-253, and 274-294; these read LFGT…MGFF, FTPS…LWLM, IVTE…NVGM, PAAI…VIAV, LVAK…GTAL, AICV…LTAM, and VFIY…MFTG.

Belongs to the G-protein coupled receptor 1 family.

The protein localises to the host membrane. The chain is G-protein coupled receptor E6 (E6) from Equus caballus (Horse).